The sequence spans 555 residues: Glypican-6 (555 aa).

The N-terminal stretch at 1-23 (MPSWIGAVILPLLGLLLSLPAGA) is a signal peptide. Residues 348–357 (PALRSARSAP) are compositionally biased toward low complexity. 2 disordered regions span residues 348–376 (PALR…PTTA) and 480–501 (GNDV…GSGC). Serine 529 carries the GPI-anchor amidated serine lipid modification. Residues 530 to 555 (SAAQRGHSLLSWSLTCIVLALQRLCR) constitute a propeptide, removed in mature form.

Belongs to the glypican family. In terms of tissue distribution, widely expressed. High expression in fetal kidney and lung and lower expressions in fetal liver and brain. In adult tissues, very abundant in ovary, high levels also observed in liver, kidney, small intestine and colon. Not detected in peripheral blood leukocytes. Detected in breast cancer cells (at protein level).

It localises to the cell membrane. The protein resides in the secreted. The protein localises to the extracellular space. In terms of biological role, cell surface proteoglycan that bears heparan sulfate. Putative cell surface coreceptor for growth factors, extracellular matrix proteins, proteases and anti-proteases. Enhances migration and invasion of cancer cells through WNT5A signaling. In Homo sapiens (Human), this protein is Glypican-6 (GPC6).